The primary structure comprises 167 residues: MAAQGWSMLLLAVLNLGIFVRPCDTQELRCLCIQEHSEFIPLKLIKNIMVIFETIYCNRKEVIAVPKNGSMICLDPDAPWVKATVGPITNRFLPEDLKQKEFPPAMKLLYSVEHEKPLYLSFGRPENKRIFPFPIRETSRHFADLAHNSDRNFLRDSSEVSLTGSDA.

The N-terminal stretch at 1 to 25 (MAAQGWSMLLLAVLNLGIFVRPCDT) is a signal peptide. Disulfide bonds link Cys-30/Cys-57 and Cys-32/Cys-73. Position 157 is a phosphoserine (Ser-157).

It belongs to the intercrine alpha (chemokine CxC) family. As to expression, expression restricted to the lung, produced by bronchoepithelial cells and is released into the airways. Expressed at low levels in fetal lung.

The protein localises to the secreted. Functionally, chemotactic for neutrophils. Involved in lung-specific neutrophil trafficking during normal and inflammatory conditions. This is C-X-C motif chemokine 15 (Cxcl15) from Mus musculus (Mouse).